Reading from the N-terminus, the 20-residue chain is Peptide encoded by miPEP171b (20 aa).

Lateral root initiations.

Functionally, regulatory peptide encoded by the primary transcript (pri-miR171b) of the microRNA miR171b that enhances the accumulation of its corresponding mature miRNA. Acts probably as a transcriptional activator of its corresponding pri-miRNA. Has no effect on the accumulation of other miRNAs. Addition of synthetic miPEP171b increases the abundance of miR171b, with consequent reduction of lateral root formation. The protein is Peptide encoded by miPEP171b of Medicago truncatula (Barrel medic).